The chain runs to 805 residues: Lon protease (805 aa).

The Lon N-terminal domain maps to 13 to 205 (IPIIVEDELF…KLIDYVIEEI (193 aa)). ATP is bound at residue 366-373 (GPPGVGKT). A Lon proteolytic domain is found at 603–803 (KDQIGLVNGL…DDVLKNALVA (201 aa)). Catalysis depends on residues Ser-708 and Lys-751.

It belongs to the peptidase S16 family. Homohexamer. Organized in a ring with a central cavity.

The protein resides in the cytoplasm. The enzyme catalyses Hydrolysis of proteins in presence of ATP.. ATP-dependent serine protease that mediates the selective degradation of mutant and abnormal proteins as well as certain short-lived regulatory proteins. Required for cellular homeostasis and for survival from DNA damage and developmental changes induced by stress. Degrades polypeptides processively to yield small peptide fragments that are 5 to 10 amino acids long. Binds to DNA in a double-stranded, site-specific manner. The protein is Lon protease of Campylobacter concisus (strain 13826).